The chain runs to 59 residues: UPF0434 protein LHK_01103 (59 aa).

It belongs to the UPF0434 family.

The protein is UPF0434 protein LHK_01103 of Laribacter hongkongensis (strain HLHK9).